Reading from the N-terminus, the 453-residue chain is Keratin, type I cytoskeletal 15 (453 aa).

The tract at residues 1–102 (MATTLLQTSS…GGDGGLLSGN (102 aa)) is head. Ser16, Ser17, Ser34, Ser48, and Ser56 each carry phosphoserine. The interval 103 to 138 (EKITMQNLNDRLASYLEKVRALEEANADLEVKIRDW) is coil 1A. The IF rod domain maps to 103–415 (EKITMQNLND…SLLEGQDARM (313 aa)). Residues 139–157 (YQRQSPTSPERDYSPYFKT) form a linker 1 region. A coil 1B region spans residues 158-249 (TDELRDKILA…KNHEEEMKEF (92 aa)). The linker 12 stretch occupies residues 250 to 269 (SNQLAGQVNVEMDAAPGVDL). The segment at 270–411 (TRVLSEMREQ…ATYHSLLEGQ (142 aa)) is coil 2. A Glycyl lysine isopeptide (Lys-Gly) (interchain with G-Cter in SUMO2) cross-link involves residue Lys298. Phosphothreonine occurs at positions 299 and 321. The tract at residues 412-453 (DARMAGIGTGEASLGGGGGGKVRINVEESVDGKVVSSRKREI) is tail. Lys444 participates in a covalent cross-link: Glycyl lysine isopeptide (Lys-Gly) (interchain with G-Cter in SUMO1); alternate. Residue Lys444 forms a Glycyl lysine isopeptide (Lys-Gly) (interchain with G-Cter in SUMO2); alternate linkage.

It belongs to the intermediate filament family. As to quaternary structure, heterotetramer of two type I and two type II keratins. Interacts with NOD2. As to expression, expressed in the basal cell layers of several stratified epithelia including esophagus, tongue, stomach, epidermis and hair follicle. In the hair follicle, expression is detected mainly in the basal layer of the outer root sheath (ORS), except just above the follicle bulb where it occurs throughout its thickness. Low expression levels are seen in the single layer of ORS cells around the base of the follicle which increases in the palisade-like cells of the bulb. Also expressed in the basal cells of the sebaceous glands, and expression in the epidermis occurs in a punctate pattern.

The protein is Keratin, type I cytoskeletal 15 of Ovis aries (Sheep).